We begin with the raw amino-acid sequence, 623 residues long: V-type proton ATPase catalytic subunit A (623 aa).

252–259 provides a ligand contact to ATP; sequence GAFGCGKT.

Belongs to the ATPase alpha/beta chains family. As to quaternary structure, V-ATPase is a heteromultimeric enzyme composed of a peripheral catalytic V1 complex (main components: subunits A, B, C, D, E, and F) attached to an integral membrane V0 proton pore complex (main component: the proteolipid protein).

It carries out the reaction ATP + H2O + 4 H(+)(in) = ADP + phosphate + 5 H(+)(out). Functionally, catalytic subunit of the peripheral V1 complex of vacuolar ATPase. V-ATPase vacuolar ATPase is responsible for acidifying a variety of intracellular compartments in eukaryotic cells. This is V-type proton ATPase catalytic subunit A from Daucus carota (Wild carrot).